We begin with the raw amino-acid sequence, 1342 residues long: DNA-directed RNA polymerase subunit beta (1342 aa).

It belongs to the RNA polymerase beta chain family. As to quaternary structure, the RNAP catalytic core consists of 2 alpha, 1 beta, 1 beta' and 1 omega subunit. When a sigma factor is associated with the core the holoenzyme is formed, which can initiate transcription.

The catalysed reaction is RNA(n) + a ribonucleoside 5'-triphosphate = RNA(n+1) + diphosphate. Its function is as follows. DNA-dependent RNA polymerase catalyzes the transcription of DNA into RNA using the four ribonucleoside triphosphates as substrates. In Mannheimia succiniciproducens (strain KCTC 0769BP / MBEL55E), this protein is DNA-directed RNA polymerase subunit beta.